Reading from the N-terminus, the 202-residue chain is Oligoribonuclease (202 aa).

Residues 2–166 (LVWIDCEMTG…ADIQESIEEL (165 aa)) form the Exonuclease domain. Y123 is an active-site residue.

It belongs to the oligoribonuclease family.

It localises to the cytoplasm. 3'-to-5' exoribonuclease specific for small oligoribonucleotides. The polypeptide is Oligoribonuclease (Cutibacterium acnes (strain DSM 16379 / KPA171202) (Propionibacterium acnes)).